Reading from the N-terminus, the 370-residue chain is Dual-specificity RNA methyltransferase RlmN (370 aa).

The active-site Proton acceptor is E93. Positions 99–337 (AEGRGTLCVS…VTTVRKTRGD (239 aa)) constitute a Radical SAM core domain. C106 and C343 are joined by a disulfide. C113, C117, and C120 together coordinate [4Fe-4S] cluster. S-adenosyl-L-methionine contacts are provided by residues 167 to 168 (GE), S199, 221 to 223 (SLH), and N300. C343 acts as the S-methylcysteine intermediate in catalysis.

The protein belongs to the radical SAM superfamily. RlmN family. Requires [4Fe-4S] cluster as cofactor.

The protein resides in the cytoplasm. The catalysed reaction is adenosine(2503) in 23S rRNA + 2 reduced [2Fe-2S]-[ferredoxin] + 2 S-adenosyl-L-methionine = 2-methyladenosine(2503) in 23S rRNA + 5'-deoxyadenosine + L-methionine + 2 oxidized [2Fe-2S]-[ferredoxin] + S-adenosyl-L-homocysteine. The enzyme catalyses adenosine(37) in tRNA + 2 reduced [2Fe-2S]-[ferredoxin] + 2 S-adenosyl-L-methionine = 2-methyladenosine(37) in tRNA + 5'-deoxyadenosine + L-methionine + 2 oxidized [2Fe-2S]-[ferredoxin] + S-adenosyl-L-homocysteine. Functionally, specifically methylates position 2 of adenine 2503 in 23S rRNA and position 2 of adenine 37 in tRNAs. m2A2503 modification seems to play a crucial role in the proofreading step occurring at the peptidyl transferase center and thus would serve to optimize ribosomal fidelity. The protein is Dual-specificity RNA methyltransferase RlmN of Francisella tularensis subsp. tularensis (strain FSC 198).